Reading from the N-terminus, the 296-residue chain is Light-independent protochlorophyllide reductase iron-sulfur ATP-binding protein (296 aa).

Residues 39 to 44 (GIGKST) and lysine 68 each bind ATP. A Mg(2+)-binding site is contributed by serine 43. Positions 124 and 158 each coordinate [4Fe-4S] cluster. 209 to 210 (NR) lines the ATP pocket.

It belongs to the NifH/BchL/ChlL family. Homodimer. Protochlorophyllide reductase is composed of three subunits; ChlL, ChlN and ChlB. The cofactor is [4Fe-4S] cluster.

It carries out the reaction chlorophyllide a + oxidized 2[4Fe-4S]-[ferredoxin] + 2 ADP + 2 phosphate = protochlorophyllide a + reduced 2[4Fe-4S]-[ferredoxin] + 2 ATP + 2 H2O. Its pathway is porphyrin-containing compound metabolism; chlorophyll biosynthesis (light-independent). In terms of biological role, component of the dark-operative protochlorophyllide reductase (DPOR) that uses Mg-ATP and reduced ferredoxin to reduce ring D of protochlorophyllide (Pchlide) to form chlorophyllide a (Chlide). This reaction is light-independent. The L component serves as a unique electron donor to the NB-component of the complex, and binds Mg-ATP. This is Light-independent protochlorophyllide reductase iron-sulfur ATP-binding protein from Prochlorococcus marinus (strain MIT 9211).